A 143-amino-acid chain; its full sequence is Large ribosomal subunit protein uL11 (143 aa).

Belongs to the universal ribosomal protein uL11 family. Part of the ribosomal stalk of the 50S ribosomal subunit. Interacts with L10 and the large rRNA to form the base of the stalk. L10 forms an elongated spine to which L12 dimers bind in a sequential fashion forming a multimeric L10(L12)X complex. Post-translationally, one or more lysine residues are methylated.

Its function is as follows. Forms part of the ribosomal stalk which helps the ribosome interact with GTP-bound translation factors. The polypeptide is Large ribosomal subunit protein uL11 (Chromohalobacter salexigens (strain ATCC BAA-138 / DSM 3043 / CIP 106854 / NCIMB 13768 / 1H11)).